The primary structure comprises 203 residues: Imidazoleglycerol-phosphate dehydratase (203 aa).

Residues 184-203 form a disordered region; it reads DPRRSSQIPSSKGVLEQAGQ.

Belongs to the imidazoleglycerol-phosphate dehydratase family.

The protein localises to the cytoplasm. It carries out the reaction D-erythro-1-(imidazol-4-yl)glycerol 3-phosphate = 3-(imidazol-4-yl)-2-oxopropyl phosphate + H2O. The protein operates within amino-acid biosynthesis; L-histidine biosynthesis; L-histidine from 5-phospho-alpha-D-ribose 1-diphosphate: step 6/9. In Prochlorococcus marinus (strain NATL1A), this protein is Imidazoleglycerol-phosphate dehydratase.